The sequence spans 95 residues: ESAT-6-like protein EsxA (95 aa).

It belongs to the WXG100 family. ESAT-6 subfamily. In terms of assembly, forms a tight 1:1 complex with EsxB.

This Corynebacterium diphtheriae (strain ATCC 700971 / NCTC 13129 / Biotype gravis) protein is ESAT-6-like protein EsxA.